We begin with the raw amino-acid sequence, 354 residues long: Peptide chain release factor 1 (354 aa).

N5-methylglutamine is present on Gln-230.

The protein belongs to the prokaryotic/mitochondrial release factor family. Methylated by PrmC. Methylation increases the termination efficiency of RF1.

Its subcellular location is the cytoplasm. Functionally, peptide chain release factor 1 directs the termination of translation in response to the peptide chain termination codons UAG and UAA. The sequence is that of Peptide chain release factor 1 from Thermus thermophilus (strain ATCC BAA-163 / DSM 7039 / HB27).